The sequence spans 161 residues: Lipoprotein signal peptidase (161 aa).

Helical transmembrane passes span 9 to 29 (WLWL…LVVE), 64 to 84 (WQKY…ANVL), and 96 to 113 (MAYA…IDRA). Active-site residues include Asp120 and Asp138. Residues 133–153 (VFNIADVAIVMGAGLLILETF) traverse the membrane as a helical segment.

The protein belongs to the peptidase A8 family.

The protein resides in the cell inner membrane. It catalyses the reaction Release of signal peptides from bacterial membrane prolipoproteins. Hydrolyzes -Xaa-Yaa-Zaa-|-(S,diacylglyceryl)Cys-, in which Xaa is hydrophobic (preferably Leu), and Yaa (Ala or Ser) and Zaa (Gly or Ala) have small, neutral side chains.. The protein operates within protein modification; lipoprotein biosynthesis (signal peptide cleavage). This protein specifically catalyzes the removal of signal peptides from prolipoproteins. The chain is Lipoprotein signal peptidase from Haemophilus ducreyi (strain 35000HP / ATCC 700724).